The following is a 184-amino-acid chain: Putative rRNA methyltransferase YlbH (184 aa).

The tract at residues 1–22 (MRVISGSKKGRSLKAVAGTSTR) is disordered.

This sequence belongs to the methyltransferase superfamily. RsmD family.

Functionally, may catalyze the S-adenosyl-L-methionine-dependent methylation of a specific base in rRNA. The protein is Putative rRNA methyltransferase YlbH (ylbH) of Bacillus subtilis (strain 168).